A 696-amino-acid polypeptide reads, in one-letter code: C2 domain-containing protein 2 (696 aa).

The chain crosses the membrane as a helical span at residues 13-33 (AQWLALVSLFVAALATVGLYL). Residues 51-242 (EPGEGPRPGS…PTTVKEAQNL (192 aa)) form the SMP-LBD domain. Ser60 is modified (phosphoserine). The 118-residue stretch at 245–362 (AASTAQESCP…KKQPSGPQSF (118 aa)) folds into the C2 domain. Phosphoserine occurs at positions 435 and 441. Residue Thr445 is modified to Phosphothreonine. The disordered stretch occupies residues 539-580 (VDSTHQEDAPSHPERAAASAPPEEAESAQASLAPKPQEDELD). The span at 542-553 (THQEDAPSHPER) shows a compositional bias: basic and acidic residues. Residues 554-572 (AAASAPPEEAESAQASLAP) show a composition bias toward low complexity. Residue Ser581 is modified to Phosphoserine.

It localises to the membrane. The chain is C2 domain-containing protein 2 (C2CD2) from Homo sapiens (Human).